The following is a 598-amino-acid chain: Pentatricopeptide repeat-containing protein At1g09900 (598 aa).

PPR repeat units lie at residues 101–135 (EDVE…GNVP), 136–170 (DIIP…GAVP), 171–201 (DVIT…MSVS), 203–237 (DVVT…DCYP), 238–272 (DVIT…GCTP), 273–307 (DVVT…GCQP), 308–342 (NVIT…GFSP), 343–377 (SVVT…GCQP), 378–412 (NSLS…GCYP), 413–447 (DIVT…GCSP), 448–482 (VLIT…DLKP), 483–517 (DTIT…GIRP), 518–552 (NAVT…GCKP), and 553–587 (NETS…GLMK).

The protein belongs to the PPR family. P subfamily.

In Arabidopsis thaliana (Mouse-ear cress), this protein is Pentatricopeptide repeat-containing protein At1g09900.